The chain runs to 369 residues: Anhydro-N-acetylmuramic acid kinase (369 aa).

11 to 18 lines the ATP pocket; sequence GTSMDAVD.

Belongs to the anhydro-N-acetylmuramic acid kinase family.

The catalysed reaction is 1,6-anhydro-N-acetyl-beta-muramate + ATP + H2O = N-acetyl-D-muramate 6-phosphate + ADP + H(+). It functions in the pathway amino-sugar metabolism; 1,6-anhydro-N-acetylmuramate degradation. Its pathway is cell wall biogenesis; peptidoglycan recycling. In terms of biological role, catalyzes the specific phosphorylation of 1,6-anhydro-N-acetylmuramic acid (anhMurNAc) with the simultaneous cleavage of the 1,6-anhydro ring, generating MurNAc-6-P. Is required for the utilization of anhMurNAc either imported from the medium or derived from its own cell wall murein, and thus plays a role in cell wall recycling. The chain is Anhydro-N-acetylmuramic acid kinase from Idiomarina loihiensis (strain ATCC BAA-735 / DSM 15497 / L2-TR).